The sequence spans 146 residues: Large ribosomal subunit protein uL15 (146 aa).

The interval 1–52 (MKLSNLSPKAGSKKRRRRVGRGIAAGQGASCGFGMRGQKSRSGTGTKAGFEG) is disordered. Basic residues predominate over residues 11–20 (GSKKRRRRVG). The segment covering 23 to 35 (IAAGQGASCGFGM) has biased composition (gly residues).

Belongs to the universal ribosomal protein uL15 family. In terms of assembly, part of the 50S ribosomal subunit.

Its function is as follows. Binds to the 23S rRNA. The sequence is that of Large ribosomal subunit protein uL15 from Picosynechococcus sp. (strain ATCC 27264 / PCC 7002 / PR-6) (Agmenellum quadruplicatum).